The chain runs to 483 residues: Proline--tRNA ligase (483 aa).

It belongs to the class-II aminoacyl-tRNA synthetase family. ProS type 3 subfamily. Homodimer.

It localises to the cytoplasm. It carries out the reaction tRNA(Pro) + L-proline + ATP = L-prolyl-tRNA(Pro) + AMP + diphosphate. Functionally, catalyzes the attachment of proline to tRNA(Pro) in a two-step reaction: proline is first activated by ATP to form Pro-AMP and then transferred to the acceptor end of tRNA(Pro). In Sulfolobus acidocaldarius (strain ATCC 33909 / DSM 639 / JCM 8929 / NBRC 15157 / NCIMB 11770), this protein is Proline--tRNA ligase.